The primary structure comprises 86 residues: Small ribosomal subunit protein bS20 (86 aa).

Residues 1–25 are disordered; the sequence is MANIKSQIKRIRTNEKARQRNKAYK. Residues 12 to 25 show a composition bias toward basic and acidic residues; sequence RTNEKARQRNKAYK.

The protein belongs to the bacterial ribosomal protein bS20 family.

Binds directly to 16S ribosomal RNA. This is Small ribosomal subunit protein bS20 from Beutenbergia cavernae (strain ATCC BAA-8 / DSM 12333 / CCUG 43141 / JCM 11478 / NBRC 16432 / NCIMB 13614 / HKI 0122).